Consider the following 369-residue polypeptide: NAD(P)H-quinone oxidoreductase subunit 1, chloroplastic (369 aa).

The next 8 membrane-spanning stretches (helical) occupy residues 29–49 (IWII…VLVI), 97–117 (IWLF…SYLV), 129–149 (LGIG…GLLM), 167–187 (AAQS…ISLL), 205–225 (LLGW…ISSL), 255–275 (FGLF…FVTV), 305–325 (IINA…FLFV), and 348–368 (FLLP…ILLL).

It belongs to the complex I subunit 1 family. NDH is composed of at least 16 different subunits, 5 of which are encoded in the nucleus.

The protein resides in the plastid. The protein localises to the chloroplast thylakoid membrane. It catalyses the reaction a plastoquinone + NADH + (n+1) H(+)(in) = a plastoquinol + NAD(+) + n H(+)(out). The enzyme catalyses a plastoquinone + NADPH + (n+1) H(+)(in) = a plastoquinol + NADP(+) + n H(+)(out). Its function is as follows. NDH shuttles electrons from NAD(P)H:plastoquinone, via FMN and iron-sulfur (Fe-S) centers, to quinones in the photosynthetic chain and possibly in a chloroplast respiratory chain. The immediate electron acceptor for the enzyme in this species is believed to be plastoquinone. Couples the redox reaction to proton translocation, and thus conserves the redox energy in a proton gradient. This is NAD(P)H-quinone oxidoreductase subunit 1, chloroplastic from Angiopteris evecta (Mule's foot fern).